The primary structure comprises 683 residues: Zinc finger protein 510 (683 aa).

A KRAB domain is found at 46 to 117 (VSFKDVTIEF…EEEFSNQSHP (72 aa)). A C2H2-type 1; degenerate zinc finger spans residues 254–276 (FECNKIGKAFNDKANCVKHNSSH). 9 consecutive C2H2-type zinc fingers follow at residues 404–426 (YKCNECGKSFCQKGHLIQHQRTH), 432–454 (FECSECGKTFSQKSHLSTHQRIH), 460–482 (YKCNECGKTFVQKSTLRGHQRIH), 488–510 (YECSECGKTFVQKSTLRDHHRIH), 516–538 (FQCNQCGKTFGQKSNLRIHQRTH), 544–566 (YQCNECEKSFWRKDHLIQHQKTH), 572–594 (FKCNECGKTFARTSTLRVHQRIH), 600–622 (FKCNECGKKFVRKAILSDHQRIH), and 628–650 (FQCNKCGKTFGQKSNLRIHQRTH).

It belongs to the krueppel C2H2-type zinc-finger protein family.

Its subcellular location is the nucleus. Functionally, may be involved in transcriptional regulation. The chain is Zinc finger protein 510 (ZNF510) from Homo sapiens (Human).